Here is a 200-residue protein sequence, read N- to C-terminus: MVNKNSPKTIDRIILGVDPGTNVMGYGLIAIKGTQLTLIQFGVIHLSKYTDHAIKLSKIFERISLLIEEYHPDEMAIEAPFFGSNVQSMLKLGRAQGVAIAAAISKQVPIFEYAPKKIKQSVTGSGNASKEQVAAMLSKILFFQEIPKLLDATDALGVAVCHYFQKGDVKKSKGGWNNFIKENPDKVKTVPAKISKKKTD.

Residues D18, E78, and D151 contribute to the active site. Mg(2+) is bound by residues D18, E78, and D151.

It belongs to the RuvC family. In terms of assembly, homodimer which binds Holliday junction (HJ) DNA. The HJ becomes 2-fold symmetrical on binding to RuvC with unstacked arms; it has a different conformation from HJ DNA in complex with RuvA. In the full resolvosome a probable DNA-RuvA(4)-RuvB(12)-RuvC(2) complex forms which resolves the HJ. Requires Mg(2+) as cofactor.

Its subcellular location is the cytoplasm. It catalyses the reaction Endonucleolytic cleavage at a junction such as a reciprocal single-stranded crossover between two homologous DNA duplexes (Holliday junction).. Functionally, the RuvA-RuvB-RuvC complex processes Holliday junction (HJ) DNA during genetic recombination and DNA repair. Endonuclease that resolves HJ intermediates. Cleaves cruciform DNA by making single-stranded nicks across the HJ at symmetrical positions within the homologous arms, yielding a 5'-phosphate and a 3'-hydroxyl group; requires a central core of homology in the junction. The consensus cleavage sequence is 5'-(A/T)TT(C/G)-3'. Cleavage occurs on the 3'-side of the TT dinucleotide at the point of strand exchange. HJ branch migration catalyzed by RuvA-RuvB allows RuvC to scan DNA until it finds its consensus sequence, where it cleaves and resolves the cruciform DNA. The sequence is that of Crossover junction endodeoxyribonuclease RuvC from Cytophaga hutchinsonii (strain ATCC 33406 / DSM 1761 / CIP 103989 / NBRC 15051 / NCIMB 9469 / D465).